A 440-amino-acid chain; its full sequence is Transposon Ty1-JR2 Gag polyprotein (440 aa).

Over residues Met1–Ser16 the composition is skewed to low complexity. Disordered stretches follow at residues Met1 to Gln93, Pro126 to Pro173, and Gly352 to Tyr440. 3 stretches are compositionally biased toward polar residues: residues Thr48–Ser60, Ser71–Gln93, and Gln127–Phe152. Low complexity predominate over residues Thr153–Thr165. The interval Asn299–His401 is RNA-binding. Low complexity predominate over residues Asn402–Ser418. The residue at position 416 (Ser416) is a Phosphoserine. Over residues Lys419–Asn428 the composition is skewed to polar residues. Residues Asn429–Tyr440 show a composition bias toward basic and acidic residues.

Homotrimer.

It localises to the cytoplasm. Its function is as follows. Capsid protein (CA) is the structural component of the virus-like particle (VLP), forming the shell that encapsulates the retrotransposons dimeric RNA genome. The particles are assembled from trimer-clustered units and there are holes in the capsid shells that allow for the diffusion of macromolecules. CA also has nucleocapsid-like chaperone activity, promoting primer tRNA(i)-Met annealing to the multipartite primer-binding site (PBS), dimerization of Ty1 RNA and initiation of reverse transcription. This is Transposon Ty1-JR2 Gag polyprotein (TY1A-JR2) from Saccharomyces cerevisiae (strain ATCC 204508 / S288c) (Baker's yeast).